Consider the following 499-residue polypeptide: Glycerol kinase (499 aa).

Position 12 (Thr12) interacts with ADP. Thr12, Thr13, and Ser14 together coordinate ATP. Residue Thr12 coordinates sn-glycerol 3-phosphate. Arg16 is an ADP binding site. Positions 82, 83, 134, and 243 each coordinate sn-glycerol 3-phosphate. Residues Arg82, Glu83, Tyr134, Asp243, and Gln244 each contribute to the glycerol site. 2 residues coordinate ADP: Thr265 and Gly308. Thr265, Gly308, Gln312, and Gly409 together coordinate ATP. Gly409 and Asn413 together coordinate ADP.

This sequence belongs to the FGGY kinase family. As to quaternary structure, homotetramer and homodimer (in equilibrium).

The catalysed reaction is glycerol + ATP = sn-glycerol 3-phosphate + ADP + H(+). It participates in polyol metabolism; glycerol degradation via glycerol kinase pathway; sn-glycerol 3-phosphate from glycerol: step 1/1. Activated by phosphorylation and inhibited by fructose 1,6-bisphosphate (FBP). Key enzyme in the regulation of glycerol uptake and metabolism. Catalyzes the phosphorylation of glycerol to yield sn-glycerol 3-phosphate. The protein is Glycerol kinase of Lachnoclostridium phytofermentans (strain ATCC 700394 / DSM 18823 / ISDg) (Clostridium phytofermentans).